The primary structure comprises 319 residues: MKPVFLDFEQPIAELTNKIDELRFVQDESAVDISDEIHRLQKKSNDLTKSIFSKLTPAQISQVSRHPQRPYTLDYIDALFTDFEELHGDRHFADDHAIVGGLARFNGQSVVVVGHQKGRDTKEKIRRNFGMPRPEGYRKALRLMKTAEKFGLPVMTFIDTPGAYPGIGAEERGQSEAIGKNLYELTRLRVPVLCTVIGEGGSGGALAVAVGDYVNMLQYSTYSVISPEGCASILWKTAEKAADAAQALGITADRLQKLDLVDTVIKEPLGGAHRDFGQTMKNVKAVLEKQLHEAQSIPLADLLSRRFDRIMAYGKFSEQ.

The region spanning 39 to 293 (RLQKKSNDLT…KAVLEKQLHE (255 aa)) is the CoA carboxyltransferase C-terminal domain.

Belongs to the AccA family. In terms of assembly, acetyl-CoA carboxylase is a heterohexamer composed of biotin carboxyl carrier protein (AccB), biotin carboxylase (AccC) and two subunits each of ACCase subunit alpha (AccA) and ACCase subunit beta (AccD).

It localises to the cytoplasm. It catalyses the reaction N(6)-carboxybiotinyl-L-lysyl-[protein] + acetyl-CoA = N(6)-biotinyl-L-lysyl-[protein] + malonyl-CoA. It participates in lipid metabolism; malonyl-CoA biosynthesis; malonyl-CoA from acetyl-CoA: step 1/1. Component of the acetyl coenzyme A carboxylase (ACC) complex. First, biotin carboxylase catalyzes the carboxylation of biotin on its carrier protein (BCCP) and then the CO(2) group is transferred by the carboxyltransferase to acetyl-CoA to form malonyl-CoA. This Neisseria gonorrhoeae (strain ATCC 700825 / FA 1090) protein is Acetyl-coenzyme A carboxylase carboxyl transferase subunit alpha.